Here is a 689-residue protein sequence, read N- to C-terminus: Glycine--tRNA ligase beta subunit (689 aa).

It belongs to the class-II aminoacyl-tRNA synthetase family. As to quaternary structure, tetramer of two alpha and two beta subunits.

Its subcellular location is the cytoplasm. The catalysed reaction is tRNA(Gly) + glycine + ATP = glycyl-tRNA(Gly) + AMP + diphosphate. This Edwardsiella ictaluri (strain 93-146) protein is Glycine--tRNA ligase beta subunit.